An 856-amino-acid chain; its full sequence is Paladin (856 aa).

Low complexity predominate over residues 1–16 (MGTTASTAQQTVSAGT). Positions 1–29 (MGTTASTAQQTVSAGTPFEGLQGSGTMDS) are disordered. Glycine 2 carries the N-myristoyl glycine lipid modification. Serine 86 carries the post-translational modification Phosphoserine.

The protein belongs to the paladin family. Expressed in endothelial cells, and in certain larger vessels, in mural cells. In the brain, possibly expressed in microglia. Expressed in peripheral blood mononuclear cells (at protein level).

The protein resides in the cytoplasm. It localises to the cytosol. The polypeptide is Paladin (PALD1) (Homo sapiens (Human)).